The chain runs to 338 residues: MDGPQPRALWSSSEKNVSEMSWNFGGEYFRYKGIPFPVGMYSPESLSLAENTSNVRDDDIFIVTYPKSGTNWMIEIVCLILKDGDPSWIRSEPIWQRAPWCETIISAFNVLDRPSPRIMSSHLPIELFTKAFFSSKAKVIYVGRNPRDVVVSLYYYSKIAGQLKDPGTPDQFLQNFLKGEVQFGSWFDHIKGWIRMQNQENFLFITYEELQQDLRGSVQRICEFLGRPLGEEALSSVVAHSAFAAMKANTMSNYSLLPASLLDHRQGEFLRKGISGDWKNHFTVAQSEAFDSVYREQMHGVQRFPWDTSEEDSSPDGQPDPEPSPSPASDDPNPGSSQ.

67–72 (KSGTNW) serves as a coordination point for 3'-phosphoadenylyl sulfate. Substrate-binding residues include W95 and W100. H122 functions as the Proton acceptor in the catalytic mechanism. 3'-phosphoadenylyl sulfate-binding positions include R144, S152, Y207, 241-246 (SAFAAM), and 271-273 (RKG). The segment at 301 to 338 (VQRFPWDTSEEDSSPDGQPDPEPSPSPASDDPNPGSSQ) is disordered. Low complexity predominate over residues 327–338 (PASDDPNPGSSQ).

This sequence belongs to the sulfotransferase 1 family. Expressed at high levels in epididymis, intestine and uterus, and low levels in brain and hypothalamus. Isoform 2 is most prominent in the brain and spinal cord, with modest expression in the lung, skin and spleen. Isoform 1 is most prominently expressed in skin and small intestine, with modest expression in muscle and prostate.

The protein resides in the cytoplasm. Its subcellular location is the cytosol. It localises to the microsome. The protein localises to the nucleus. It carries out the reaction an alcohol + 3'-phosphoadenylyl sulfate = an alkyl sulfate + adenosine 3',5'-bisphosphate + H(+). It catalyses the reaction pregnenolone + 3'-phosphoadenylyl sulfate = pregnenolone sulfate + adenosine 3',5'-bisphosphate + H(+). The catalysed reaction is 3beta-hydroxyandrost-5-en-17-one + 3'-phosphoadenylyl sulfate = dehydroepiandrosterone 3-sulfate + adenosine 3',5'-bisphosphate + H(+). The enzyme catalyses cholesterol + 3'-phosphoadenylyl sulfate = cholesterol sulfate + adenosine 3',5'-bisphosphate + H(+). Functionally, sulfotransferase that utilizes 3'-phospho-5'-adenylyl sulfate (PAPS) as sulfonate donor to catalyze the sulfate conjugation. Preferentially sulfonates cholesterol. Catalyzes sulfation of the 3beta-hydroxyl groups of steroids, such as, pregnenolone and dehydroepiandrosterone (DHEA). Cholesterol sulfation is approximately 10-fold higher than for pregnenolone and 20-fold higher than for DHEA. Plays a role in epidermal cholesterol metabolism and in the regulation of epidermal proliferation and differentiation. Its function is as follows. Strongly sulfonates pregnenolone, however is capable to sulfonate cholesterol with a high degree of efficiency. DHEA is a relatively poor substrate. The protein is Sulfotransferase 2B1 (Sult2b1) of Mus musculus (Mouse).